The chain runs to 96 residues: Pro-glucagon (96 aa).

2 stretches are compositionally biased toward basic and acidic residues: residues 1-12 (LQDAEDSSRFDA) and 19-30 (EARELSTPKXHS). The disordered stretch occupies residues 1–35 (LQDAEDSSRFDADDTLAGEARELSTPKXHSEGTFS).

The protein belongs to the glucagon family.

It is found in the secreted. In terms of biological role, plays a key role in glucose metabolism and homeostasis. Regulates blood glucose by increasing gluconeogenesis and decreasing glycolysis. This chain is Pro-glucagon (gcg), found in Myoxocephalus scorpius (Shorthorn sculpin).